The primary structure comprises 1083 residues: Carbamoyl phosphate synthase large chain (1083 aa).

A carboxyphosphate synthetic domain region spans residues Met1–Glu402. ATP contacts are provided by Arg129, Arg169, Gly175, Gly176, Glu208, Ile210, Glu215, Gly241, Val242, His243, Gln285, and Glu299. In terms of domain architecture, ATP-grasp 1 spans Lys133 to Val328. Gln285, Glu299, and Asn301 together coordinate Mg(2+). Gln285, Glu299, and Asn301 together coordinate Mn(2+). The tract at residues Val403–Val557 is oligomerization domain. A carbamoyl phosphate synthetic domain region spans residues Pro558 to Gly944. The ATP-grasp 2 domain maps to Ser683–Ala878. 10 residues coordinate ATP: Arg719, Arg758, Leu760, Glu765, Gly790, Val791, His792, Ser793, Gln833, and Glu849. Mg(2+)-binding residues include Gln833, Glu849, and Asn851. Mn(2+) contacts are provided by Gln833, Glu849, and Asn851. The 139-residue stretch at Thr945–Val1083 folds into the MGS-like domain. Residues Thr945–Val1083 are allosteric domain.

Belongs to the CarB family. As to quaternary structure, composed of two chains; the small (or glutamine) chain promotes the hydrolysis of glutamine to ammonia, which is used by the large (or ammonia) chain to synthesize carbamoyl phosphate. Tetramer of heterodimers (alpha,beta)4. Mg(2+) is required as a cofactor. Mn(2+) serves as cofactor.

The enzyme catalyses hydrogencarbonate + L-glutamine + 2 ATP + H2O = carbamoyl phosphate + L-glutamate + 2 ADP + phosphate + 2 H(+). The catalysed reaction is hydrogencarbonate + NH4(+) + 2 ATP = carbamoyl phosphate + 2 ADP + phosphate + 2 H(+). It functions in the pathway amino-acid biosynthesis; L-arginine biosynthesis; carbamoyl phosphate from bicarbonate: step 1/1. The protein operates within pyrimidine metabolism; UMP biosynthesis via de novo pathway; (S)-dihydroorotate from bicarbonate: step 1/3. Large subunit of the glutamine-dependent carbamoyl phosphate synthetase (CPSase). CPSase catalyzes the formation of carbamoyl phosphate from the ammonia moiety of glutamine, carbonate, and phosphate donated by ATP, constituting the first step of 2 biosynthetic pathways, one leading to arginine and/or urea and the other to pyrimidine nucleotides. The large subunit (synthetase) binds the substrates ammonia (free or transferred from glutamine from the small subunit), hydrogencarbonate and ATP and carries out an ATP-coupled ligase reaction, activating hydrogencarbonate by forming carboxy phosphate which reacts with ammonia to form carbamoyl phosphate. The chain is Carbamoyl phosphate synthase large chain from Rhodopirellula baltica (strain DSM 10527 / NCIMB 13988 / SH1).